We begin with the raw amino-acid sequence, 176 residues long: Large ribosomal subunit protein uL6 (176 aa).

This sequence belongs to the universal ribosomal protein uL6 family. Part of the 50S ribosomal subunit.

In terms of biological role, this protein binds to the 23S rRNA, and is important in its secondary structure. It is located near the subunit interface in the base of the L7/L12 stalk, and near the tRNA binding site of the peptidyltransferase center. In Burkholderia lata (strain ATCC 17760 / DSM 23089 / LMG 22485 / NCIMB 9086 / R18194 / 383), this protein is Large ribosomal subunit protein uL6.